A 269-amino-acid chain; its full sequence is Triosephosphate isomerase (269 aa).

A substrate-binding site is contributed by 8–10 (NWK). Catalysis depends on H105, which acts as the Electrophile. The Proton acceptor role is filled by E183. Substrate contacts are provided by residues G189, S227, and 248-249 (GG).

It belongs to the triosephosphate isomerase family. Homodimer.

The protein resides in the cytoplasm. The catalysed reaction is D-glyceraldehyde 3-phosphate = dihydroxyacetone phosphate. It participates in carbohydrate biosynthesis; gluconeogenesis. The protein operates within carbohydrate degradation; glycolysis; D-glyceraldehyde 3-phosphate from glycerone phosphate: step 1/1. Its function is as follows. Involved in the gluconeogenesis. Catalyzes stereospecifically the conversion of dihydroxyacetone phosphate (DHAP) to D-glyceraldehyde-3-phosphate (G3P). The protein is Triosephosphate isomerase of Psychrobacter arcticus (strain DSM 17307 / VKM B-2377 / 273-4).